Here is a 440-residue protein sequence, read N- to C-terminus: 3-phosphoshikimate 1-carboxyvinyltransferase (440 aa).

3 residues coordinate 3-phosphoshikimate: Lys25, Ser26, and Arg30. Lys25 contacts phosphoenolpyruvate. Positions 96 and 124 each coordinate phosphoenolpyruvate. 3-phosphoshikimate contacts are provided by Ser168, Gln169, Asp310, and Lys337. Gln169 contacts phosphoenolpyruvate. Asp310 serves as the catalytic Proton acceptor. Residues Arg341, Arg382, and Lys409 each contribute to the phosphoenolpyruvate site.

Belongs to the EPSP synthase family. As to quaternary structure, monomer.

It localises to the cytoplasm. It catalyses the reaction 3-phosphoshikimate + phosphoenolpyruvate = 5-O-(1-carboxyvinyl)-3-phosphoshikimate + phosphate. Its pathway is metabolic intermediate biosynthesis; chorismate biosynthesis; chorismate from D-erythrose 4-phosphate and phosphoenolpyruvate: step 6/7. Catalyzes the transfer of the enolpyruvyl moiety of phosphoenolpyruvate (PEP) to the 5-hydroxyl of shikimate-3-phosphate (S3P) to produce enolpyruvyl shikimate-3-phosphate and inorganic phosphate. The sequence is that of 3-phosphoshikimate 1-carboxyvinyltransferase from Chlamydia trachomatis serovar A (strain ATCC VR-571B / DSM 19440 / HAR-13).